A 443-amino-acid polypeptide reads, in one-letter code: MTTETLIITGGHVLQLGQDPGIIEANIRVNCITGKITNIDEDPVSAQQRDANDEIIRTLDAAGCVVMPGLVNAHTHAAMTLLRGYADDKPLQAWLREDIWPAEAEMTPTGVRAGTELAIVEMIRSGTTAFADMYFHVPEVVAAIKNAGVRARVGHGVVTAGKDDEAARNDLNKGLEVAQAYDGAADDRIQTAFMPHSLTTVGEEYLQEAVSEARQDNIPIHYHANETRSEVDPIVDNHNKRPLTYASGLDMLSSSDFLAHGVHLETDEIDQLAEAGASLVHCPASNMKLASGIAPIPALLDAGVTVALGTDGAASNNDLDMFDELRDAAMLGKIGADDAAAVPAAQAIHMATAGGADALGLPGGQIKEEAVADLIVVDLDSPHLTPTHNIISHLAYAARGSDVKHTVCDGTVLMQNREIQTIDVDAVVETAETQAQSLIQRMS.

Residues H74 and H76 each coordinate Zn(2+). Substrate is bound by residues E103 and H196. H223 is a binding site for Zn(2+). Residues E226 and D311 each contribute to the substrate site. Residue D311 participates in Zn(2+) binding.

It belongs to the metallo-dependent hydrolases superfamily. MTA/SAH deaminase family. The cofactor is Zn(2+).

It catalyses the reaction S-adenosyl-L-homocysteine + H2O + H(+) = S-inosyl-L-homocysteine + NH4(+). The enzyme catalyses S-methyl-5'-thioadenosine + H2O + H(+) = S-methyl-5'-thioinosine + NH4(+). Its function is as follows. Catalyzes the deamination of 5-methylthioadenosine and S-adenosyl-L-homocysteine into 5-methylthioinosine and S-inosyl-L-homocysteine, respectively. Is also able to deaminate adenosine. This chain is 5-methylthioadenosine/S-adenosylhomocysteine deaminase, found in Haloquadratum walsbyi (strain DSM 16790 / HBSQ001).